The chain runs to 354 residues: Histidinol-phosphate aminotransferase (354 aa).

N6-(pyridoxal phosphate)lysine is present on Lys215.

This sequence belongs to the class-II pyridoxal-phosphate-dependent aminotransferase family. Histidinol-phosphate aminotransferase subfamily. Homodimer. Pyridoxal 5'-phosphate is required as a cofactor.

It carries out the reaction L-histidinol phosphate + 2-oxoglutarate = 3-(imidazol-4-yl)-2-oxopropyl phosphate + L-glutamate. It functions in the pathway amino-acid biosynthesis; L-histidine biosynthesis; L-histidine from 5-phospho-alpha-D-ribose 1-diphosphate: step 7/9. This Vesicomyosocius okutanii subsp. Calyptogena okutanii (strain HA) protein is Histidinol-phosphate aminotransferase.